A 62-amino-acid chain; its full sequence is Large ribosomal subunit protein bL33c (62 aa).

Belongs to the bacterial ribosomal protein bL33 family.

The protein resides in the plastid. Its subcellular location is the chloroplast. In Cyanidioschyzon merolae (strain NIES-3377 / 10D) (Unicellular red alga), this protein is Large ribosomal subunit protein bL33c.